A 239-amino-acid polypeptide reads, in one-letter code: Tubulin beta-3 chain (239 aa).

Residue N22 coordinates GTP. The disordered stretch occupies residues 207-239 (EESNMNDLVSEYQQYQDASAEPXXEQEEDYEEA). The segment covering 230 to 239 (XEQEEDYEEA) has biased composition (acidic residues).

It belongs to the tubulin family. In terms of assembly, dimer of alpha and beta chains. A typical microtubule is a hollow water-filled tube with an outer diameter of 25 nm and an inner diameter of 15 nM. Alpha-beta heterodimers associate head-to-tail to form protofilaments running lengthwise along the microtubule wall with the beta-tubulin subunit facing the microtubule plus end conferring a structural polarity. Microtubules usually have 13 protofilaments but different protofilament numbers can be found in some organisms and specialized cells. It depends on Mg(2+) as a cofactor.

It localises to the cytoplasm. The protein localises to the cytoskeleton. Its function is as follows. Tubulin is the major constituent of microtubules, a cylinder consisting of laterally associated linear protofilaments composed of alpha- and beta-tubulin heterodimers. Microtubules grow by the addition of GTP-tubulin dimers to the microtubule end, where a stabilizing cap forms. Below the cap, tubulin dimers are in GDP-bound state, owing to GTPase activity of alpha-tubulin. The polypeptide is Tubulin beta-3 chain (TUBB3) (Anemia phyllitidis (Fern)).